A 233-amino-acid chain; its full sequence is B-cell lymphoma/leukemia 10 (233 aa).

Residue Met1 is modified to N-acetylmethionine. Residues 13–101 (LTEVKKDALE…QNFLIQKITD (89 aa)) form the CARD domain. Glycyl lysine isopeptide (Lys-Gly) (interchain with G-Cter in ubiquitin) cross-links involve residues Lys17, Lys31, and Lys63. Ser138 is modified (phosphoserine). A disordered region spans residues 187-233 (FSSTTLPRPGDPGAPPLPPDLQLEEEGTCANSSEMFLPLRSRTVSRQ). Positions 195–205 (PGDPGAPPLPP) are enriched in pro residues.

In terms of assembly, homomultimer; homooligomerized following recruitment by CARD domain-containing proteins that form a nucleating helical template that recruits BCL10 via CARD-CARD interaction. Self-associates by CARD-CARD interaction and interacts with other CARD-proteins such as CARD9, CARD10, CARD11 and CARD14. Forms a complex with CARD14 and MALT1; resulting in the formation of a CBM (CARD14-BCL10-MALT1) complex. Forms a complex with CARD11 and MALT1; resulting in the formation of a CBM (CARD11-BCL10-MALT1) complex. Forms a complex with CARD9 and MALT1; resulting in the formation of a CBM (CARD9-BCL10-MALT1) complex. Found in a membrane raft complex, at least composed of BCL10, CARD11, DPP4 and IKBKB. Binds caspase-9 with its C-terminal domain. Interacts with TRAF2 and BIRC2/c-IAP2. Interacts with PELI2 and SOCS3; these interactions may be mutually exclusive. In terms of processing, phosphorylated. Phosphorylation results in dissociation from TRAF2 and binding to BIRC2/c-IAP2. Phosphorylated by IKBKB/IKKB. Ubiquitinated via both 'Lys-63'-linked and linear ('Met-1'-linked) polyubiquitin chains in response to T-cell receptor (TCR) activation. Ubiquitination is recognized by IKBKG/NEMO, the regulatory subunit of I-kappa-B kinase (IKK), and is required for TCR-induced NF-kappa-B activation. Linear ubiquitination at Lys-17, Lys-31 and Lys-63 is mediated by RNF31/HOIP; linear ubiquitination is recognized with much higher affinity than 'Lys-63'-linked ubiquitin by IKBKG/NEMO. CARD11 is required for linear ubiquitination by HOIP by promoting the targeting of BCL10 to RNF31/HOIP. Post-translationally, proteolytically cleaved by MALT1; required for T-cell activation. As to expression, ubiquitous.

Its subcellular location is the cytoplasm. It localises to the perinuclear region. It is found in the membrane raft. Plays a key role in both adaptive and innate immune signaling by bridging CARD domain-containing proteins to immune activation. Acts by channeling adaptive and innate immune signaling downstream of CARD domain-containing proteins CARD9, CARD11 and CARD14 to activate NF-kappa-B and MAP kinase p38 (MAPK11, MAPK12, MAPK13 and/or MAPK14) pathways which stimulate expression of genes encoding pro-inflammatory cytokines and chemokines. Recruited by activated CARD domain-containing proteins: homooligomerized CARD domain-containing proteins form a nucleating helical template that recruits BCL10 via CARD-CARD interaction, thereby promoting polymerization of BCL10, subsequent recruitment of MALT1 and formation of a CBM complex. This leads to activation of NF-kappa-B and MAP kinase p38 (MAPK11, MAPK12, MAPK13 and/or MAPK14) pathways which stimulate expression of genes encoding pro-inflammatory cytokines and chemokines. Activated by CARD9 downstream of C-type lectin receptors; CARD9-mediated signals are essential for antifungal immunity. Activated by CARD11 downstream of T-cell receptor (TCR) and B-cell receptor (BCR). Promotes apoptosis, pro-caspase-9 maturation and activation of NF-kappa-B via NIK and IKK. The polypeptide is B-cell lymphoma/leukemia 10 (Homo sapiens (Human)).